Here is a 290-residue protein sequence, read N- to C-terminus: Small ribosomal subunit biogenesis GTPase RsgA (290 aa).

Residues 62-213 (KNSLVRPPIV…IADTPGFSSL (152 aa)) form the CP-type G domain. GTP is bound by residues 111–114 (SKLD) and 156–164 (GQTGVGKST). 4 residues coordinate Zn(2+): Cys237, Cys242, His244, and Cys250.

This sequence belongs to the TRAFAC class YlqF/YawG GTPase family. RsgA subfamily. Monomer. Associates with 30S ribosomal subunit, binds 16S rRNA. Zn(2+) serves as cofactor.

It is found in the cytoplasm. Its function is as follows. One of several proteins that assist in the late maturation steps of the functional core of the 30S ribosomal subunit. Helps release RbfA from mature subunits. May play a role in the assembly of ribosomal proteins into the subunit. Circularly permuted GTPase that catalyzes slow GTP hydrolysis, GTPase activity is stimulated by the 30S ribosomal subunit. The polypeptide is Small ribosomal subunit biogenesis GTPase RsgA (Streptococcus agalactiae serotype V (strain ATCC BAA-611 / 2603 V/R)).